A 956-amino-acid polypeptide reads, in one-letter code: Bifunctional glutamine synthetase adenylyltransferase/adenylyl-removing enzyme (956 aa).

Residues 1-441 (MLPLSTPLLA…IFTQLIGDDS (441 aa)) form an adenylyl removase region. An adenylyl transferase region spans residues 450–956 (HVPFKSLWLE…RRSWQQWLGE (507 aa)).

This sequence belongs to the GlnE family. It depends on Mg(2+) as a cofactor.

It carries out the reaction [glutamine synthetase]-O(4)-(5'-adenylyl)-L-tyrosine + phosphate = [glutamine synthetase]-L-tyrosine + ADP. The enzyme catalyses [glutamine synthetase]-L-tyrosine + ATP = [glutamine synthetase]-O(4)-(5'-adenylyl)-L-tyrosine + diphosphate. Functionally, involved in the regulation of glutamine synthetase GlnA, a key enzyme in the process to assimilate ammonia. When cellular nitrogen levels are high, the C-terminal adenylyl transferase (AT) inactivates GlnA by covalent transfer of an adenylyl group from ATP to specific tyrosine residue of GlnA, thus reducing its activity. Conversely, when nitrogen levels are low, the N-terminal adenylyl removase (AR) activates GlnA by removing the adenylyl group by phosphorolysis, increasing its activity. The regulatory region of GlnE binds the signal transduction protein PII (GlnB) which indicates the nitrogen status of the cell. This chain is Bifunctional glutamine synthetase adenylyltransferase/adenylyl-removing enzyme, found in Photorhabdus laumondii subsp. laumondii (strain DSM 15139 / CIP 105565 / TT01) (Photorhabdus luminescens subsp. laumondii).